The following is a 128-amino-acid chain: Small ribosomal subunit protein uS9c (128 aa).

The segment at 106–128 is disordered; sequence SRIKERKKYGLKKARKAPQFSKR. The segment covering 109 to 128 has biased composition (basic residues); the sequence is KERKKYGLKKARKAPQFSKR.

It belongs to the universal ribosomal protein uS9 family.

Its subcellular location is the plastid. The protein localises to the chloroplast. The sequence is that of Small ribosomal subunit protein uS9c (rps9) from Cyanidium caldarium (Red alga).